The chain runs to 245 residues: Extracellular protein ARB_04177 (245 aa).

Its subcellular location is the secreted. The polypeptide is Extracellular protein ARB_04177 (Arthroderma benhamiae (strain ATCC MYA-4681 / CBS 112371) (Trichophyton mentagrophytes)).